The chain runs to 2205 residues: Genome polyprotein (2205 aa).

Gly-2 is lipidated: N-myristoyl glycine; by host. At 2-1518 the chain is on the cytoplasmic side; sequence GAQVSSQKVG…NINRAMTILQ (1517 aa). Positions 579–599 are amphipathic alpha-helix; sequence GLGDLIEGVVEGVTRNALTPL. Residues 598 to 613 are compositionally biased toward polar residues; it reads PLTPVNNLPDTRSSGP. The disordered stretch occupies residues 598 to 619; it reads PLTPVNNLPDTRSSGPAHSKET. Residues His-899 and Asp-917 each act as for protease 2A activity in the active site. Residues Cys-934 and Cys-936 each contribute to the Zn(2+) site. The active-site For protease 2A activity is the Cys-988. Residues Cys-994 and His-996 each contribute to the Zn(2+) site. Residues 1126 to 1198 form a membrane-binding region; the sequence is GDSWLKKFTE…HQSCPSQEHQ (73 aa). The tract at residues 1126 to 1264 is oligomerization; that stretch reads GDSWLKKFTE…SPGTGKSVAT (139 aa). An RNA-binding region spans residues 1147 to 1151; that stretch reads SNKIS. Residues 1230–1386 enclose the SF3 helicase domain; the sequence is EHTINNYVQF…SEYSRDGKLN (157 aa). 1254–1261 is a binding site for ATP; it reads GSPGTGKS. Positions 1394, 1397, 1406, and 1411 each coordinate Zn(2+). A C4-type zinc finger spans residues 1394-1411; the sequence is CKNCHQPANFKRCCPLVC. The segment at 1438-1445 is RNA-binding; sequence ERNRRSSI. Residues 1449-1454 form an oligomerization region; it reads MEALFQ. The stretch at 1519 to 1534 is an intramembrane region; that stretch reads AVTTFAAVAGVVYVMY. The Cytoplasmic segment spans residues 1535-2205; that stretch reads KLFAGHQGAY…TLYRRWLDSF (671 aa). At Tyr-1544 the chain carries O-(5'-phospho-RNA)-tyrosine. Residues 1564 to 1742 form the Peptidase C3 domain; sequence GPGFDYAVAM…FAAALKRSYF (179 aa). Active-site for protease 3C activity residues include His-1603, Glu-1634, and Cys-1710. A RdRp catalytic domain is found at 1971 to 2086; it reads MEEKLFDYTG…SYPHEVDASL (116 aa). The Mg(2+) site is built by Asp-1977 and Asp-2072.

It belongs to the picornaviruses polyprotein family. As to quaternary structure, interacts with capsid protein VP1 and capsid protein VP3 to form heterotrimeric protomers. Interacts with capsid protein VP0, and capsid protein VP3 to form heterotrimeric protomers. Interacts with human PVR. Five protomers subsequently associate to form pentamers which serve as building blocks for the capsid. Interacts with capsid protein VP2, capsid protein VP3 and capsid protein VP4 following cleavage of capsid protein VP0. In terms of assembly, interacts with capsid protein VP1 and capsid protein VP3 in the mature capsid. As to quaternary structure, interacts with capsid protein VP0 and capsid protein VP1 to form heterotrimeric protomers. Five protomers subsequently associate to form pentamers which serve as building blocks for the capsid. Interacts with capsid protein VP4 in the mature capsid. Interacts with protein 2C; this interaction may be important for virion morphogenesis. Interacts with capsid protein VP1 and capsid protein VP3. In terms of assembly, homodimer. As to quaternary structure, homohexamer; forms a hexameric ring structure with 6-fold symmetry characteristic of AAA+ ATPases. Interacts (via N-terminus) with host RTN3 (via reticulon domain); this interaction is important for viral replication. Interacts with capsid protein VP3; this interaction may be important for virion morphogenesis. Interacts with protein 3CD. In terms of assembly, homodimer. Interacts with host GBF1. Interacts (via GOLD domain) with host ACBD3 (via GOLD domain); this interaction allows the formation of a viral protein 3A/ACBD3 heterotetramer with a 2:2 stoichiometry, which will stimulate the recruitment of host PI4KB in order to synthesize PI4P at the viral RNA replication sites. As to quaternary structure, interacts with RNA-directed RNA polymerase. Interacts with protein 3AB and with RNA-directed RNA polymerase. In terms of assembly, interacts with Viral protein genome-linked and with protein 3CD. Mg(2+) serves as cofactor. Post-translationally, specific enzymatic cleavages in vivo by the viral proteases yield processing intermediates and the mature proteins. Myristoylation is required for the formation of pentamers during virus assembly. Further assembly of 12 pentamers and a molecule of genomic RNA generates the provirion. In terms of processing, during virion maturation, immature virions are rendered infectious following cleavage of VP0 into VP4 and VP2. This maturation seems to be an autocatalytic event triggered by the presence of RNA in the capsid and it is followed by a conformational change infectious virion. Post-translationally, myristoylation is required during RNA encapsidation and formation of the mature virus particle. VPg is uridylylated by the polymerase into VPg-pUpU. This acts as a nucleotide-peptide primer for the genomic RNA replication.

The protein resides in the virion. Its subcellular location is the host cytoplasm. It is found in the host cytoplasmic vesicle membrane. It localises to the host nucleus. It carries out the reaction a ribonucleoside 5'-triphosphate + H2O = a ribonucleoside 5'-diphosphate + phosphate + H(+). The enzyme catalyses Selective cleavage of Tyr-|-Gly bond in the picornavirus polyprotein.. The catalysed reaction is RNA(n) + a ribonucleoside 5'-triphosphate = RNA(n+1) + diphosphate. It catalyses the reaction Selective cleavage of Gln-|-Gly bond in the poliovirus polyprotein. In other picornavirus reactions Glu may be substituted for Gln, and Ser or Thr for Gly.. Replication or transcription is subject to high level of random mutations by the nucleotide analog ribavirin. Its function is as follows. Forms an icosahedral capsid of pseudo T=3 symmetry with capsid proteins VP2 and VP3. The capsid is 300 Angstroms in diameter, composed of 60 copies of each capsid protein and enclosing the viral positive strand RNA genome. Capsid protein VP1 mainly forms the vertices of the capsid. Capsid protein VP1 interacts with host cell receptor PVR to provide virion attachment to target host cells. This attachment induces virion internalization predominantly through clathrin- and caveolin-independent endocytosis in Hela cells and through caveolin-mediated endocytosis in brain microvascular endothelial cells. Tyrosine kinases are probably involved in the entry process. Virus binding to PVR induces increased junctional permeability and rearrangement of junctional proteins. Modulation of endothelial tight junctions, as well as cytolytic infection of endothelial cells themselves, may result in loss of endothelial integrity which may help the virus to reach the CNS. After binding to its receptor, the capsid undergoes conformational changes. Capsid protein VP1 N-terminus (that contains an amphipathic alpha-helix) and capsid protein VP4 are externalized. Together, they shape a pore in the host membrane through which viral genome is translocated to host cell cytoplasm. In terms of biological role, forms an icosahedral capsid of pseudo T=3 symmetry with capsid proteins VP2 and VP3. The capsid is 300 Angstroms in diameter, composed of 60 copies of each capsid protein and enclosing the viral positive strand RNA genome. Lies on the inner surface of the capsid shell. After binding to the host receptor, the capsid undergoes conformational changes. Capsid protein VP4 is released, Capsid protein VP1 N-terminus is externalized, and together, they shape a pore in the host membrane through which the viral genome is translocated into the host cell cytoplasm. Functionally, component of immature procapsids, which is cleaved into capsid proteins VP4 and VP2 after maturation. Allows the capsid to remain inactive before the maturation step. Its function is as follows. Cysteine protease that cleaves viral polyprotein and specific host proteins. It is responsible for the autocatalytic cleavage between the P1 and P2 regions, which is the first cleavage occurring in the polyprotein. Also cleaves the host translation initiation factor EIF4G1, in order to shut down the capped cellular mRNA translation. Inhibits the host nucleus-cytoplasm protein and RNA trafficking by cleaving host members of the nuclear pores including NUP98, NUP62 and NUP153. Counteracts stress granule formation probably by antagonizing its assembly or promoting its dissassembly. Cleaves and inhibits host IFIH1/MDA5, thereby inhibiting the type-I IFN production and the establishment of the antiviral state. Cleaves and inhibits host MAVS, thereby inhibiting the type-I IFN production and the establishment of the antiviral state. In terms of biological role, plays an essential role in the virus replication cycle by acting as a viroporin. Creates a pore in the host endoplasmic reticulum and as a consequence releases Ca2+ in the cytoplasm of infected cell. In turn, high levels of cytoplasmic calcium may trigger membrane trafficking and transport of viral ER-associated proteins to viroplasms, sites of viral genome replication. Induces and associates with structural rearrangements of intracellular membranes. Displays RNA-binding, nucleotide binding and NTPase activities. May play a role in virion morphogenesis and viral RNA encapsidation by interacting with the capsid protein VP3. Functionally, localizes the viral replication complex to the surface of membranous vesicles. Together with protein 3CD binds the Cis-Active RNA Element (CRE) which is involved in RNA synthesis initiation. Acts as a cofactor to stimulate the activity of 3D polymerase, maybe through a nucleid acid chaperone activity. Its function is as follows. Localizes the viral replication complex to the surface of membranous vesicles. It inhibits host cell endoplasmic reticulum-to-Golgi apparatus transport and causes the disassembly of the Golgi complex, possibly through GBF1 interaction. This would result in depletion of MHC, trail receptors and IFN receptors at the host cell surface. Plays an essential role in viral RNA replication by recruiting ACBD3 and PI4KB at the viral replication sites, thereby allowing the formation of the rearranged membranous structures where viral replication takes place. In terms of biological role, acts as a primer for viral RNA replication and remains covalently bound to viral genomic RNA. VPg is uridylylated prior to priming replication into VPg-pUpU. The oriI viral genomic sequence may act as a template for this. The VPg-pUpU is then used as primer on the genomic RNA poly(A) by the RNA-dependent RNA polymerase to replicate the viral genome. During genome replication, the VPg-RNA linkage is removed by the host TDP2, thereby accelerating replication. During the late stage of the replication cycle, host TDP2 is excluded from sites of viral RNA synthesis and encapsidation, allowing for the generation of progeny virions. Involved in the viral replication complex and viral polypeptide maturation. It exhibits protease activity with a specificity and catalytic efficiency that is different from protease 3C. Protein 3CD lacks polymerase activity. Protein 3CD binds to the 5'UTR of the viral genome. Functionally, major viral protease that mediates proteolytic processing of the polyprotein. Cleaves host EIF5B, contributing to host translation shutoff. Also cleaves host PABPC1, contributing to host translation shutoff. Cleaves host RIGI and thus contributes to the inhibition of type I interferon production. Cleaves host NLRP1, triggers host N-glycine-mediated degradation of the autoinhibitory NLRP1 N-terminal fragment. Inhibits the integrated stress response (ISR) in the infected cell by cleaving host G3BP1. Stress granule formation is thus inhibited, which allows protein synthesis and viral replication. Its function is as follows. Replicates the viral genomic RNA on the surface of intracellular membranes. May form linear arrays of subunits that propagate along a strong head-to-tail interaction called interface-I. Covalently attaches UMP to a tyrosine of VPg, which is used to prime RNA synthesis. The positive stranded RNA genome is first replicated at virus induced membranous vesicles, creating a dsRNA genomic replication form. This dsRNA is then used as template to synthesize positive stranded RNA genomes. ss(+)RNA genomes are either translated, replicated or encapsidated. In Homo sapiens (Human), this protein is Genome polyprotein.